The primary structure comprises 431 residues: Serine--tRNA ligase (431 aa).

Position 238–240 (238–240) interacts with L-serine; sequence TAE. 269 to 271 is an ATP binding site; the sequence is RSE. Glutamate 292 is an L-serine binding site. An ATP-binding site is contributed by 356–359; sequence EISS. Serine 391 is a binding site for L-serine.

It belongs to the class-II aminoacyl-tRNA synthetase family. Type-1 seryl-tRNA synthetase subfamily. As to quaternary structure, homodimer. The tRNA molecule binds across the dimer.

The protein resides in the cytoplasm. It carries out the reaction tRNA(Ser) + L-serine + ATP = L-seryl-tRNA(Ser) + AMP + diphosphate + H(+). It catalyses the reaction tRNA(Sec) + L-serine + ATP = L-seryl-tRNA(Sec) + AMP + diphosphate + H(+). It participates in aminoacyl-tRNA biosynthesis; selenocysteinyl-tRNA(Sec) biosynthesis; L-seryl-tRNA(Sec) from L-serine and tRNA(Sec): step 1/1. Its function is as follows. Catalyzes the attachment of serine to tRNA(Ser). Is also able to aminoacylate tRNA(Sec) with serine, to form the misacylated tRNA L-seryl-tRNA(Sec), which will be further converted into selenocysteinyl-tRNA(Sec). The polypeptide is Serine--tRNA ligase (Bdellovibrio bacteriovorus (strain ATCC 15356 / DSM 50701 / NCIMB 9529 / HD100)).